The primary structure comprises 710 residues: MPTSTKSKTKTTTKKKTTRKRVTPGKNLVIVESPAKAKTIEKYLGRNYKVVASVGHIRDLKKSTMSVDIENDYEPQYINIRGKAPLINSLKKEAKAAKAVYLASDPDREGEAISWHLAHILNLPLEEKNRVVFNEITKDAVKNAFKEPRQIDVDLVDAQQARRVLDRLVGYSISPILWKKVKKGLSAGRVQSIALKLIVDRENEINAFIPEEYWSIDGEFKKGTKKFKASFWGIDGKKHPLKTNEDVIKVMERLDGPDFNVDKVEKKERRRNAPLPYTTSSMQQDAANKLNFRTRKTMMVAQQLYEGLTLGSQGHQGLITYMRTDSTRISPVAQSAAHNYIADQFGEKYSKHGSKVKNASGAQDAHEAIRPSNVFNTPDAIAKYLDKDQLKLYTLIWNRFVASQMVAAIFDTVKVNLSQNGVIFIANGSQVKFDGYLRIYNDSDKSNMLPEMEENETVKKANVKPEQHFTQPPARYSEATLIKTLEENGVGRPSTYAPTLETIQKRYYVRLSAKRFEPTELGEIVNKLIVEFFPNIVNTEFTAEMEKDLDEVEEGKRQWIEVVDQFYKPFAKELENAEEGMEKIQIKDEPAGFDCDVCGSPMVIKLGRFGKFYACSNFPDCRNTKAIVKEIGVKCPLCHEGNIIERKTKKNRIFYGCDRYPDCEFTSWDKPIGRDCPKSGHFLVEKKVRGGGKQVVCSNDECDYQEEKQK.

A disordered region spans residues 1-22; the sequence is MPTSTKSKTKTTTKKKTTRKRV. The segment covering 7 to 22 has biased composition (basic residues); that stretch reads SKTKTTTKKKTTRKRV. In terms of domain architecture, Toprim spans 26–136; that stretch reads KNLVIVESPA…EKNRVVFNEI (111 aa). 2 residues coordinate Mg(2+): glutamate 32 and aspartate 105. The Topo IA-type catalytic domain maps to 152–574; sequence DVDLVDAQQA…QFYKPFAKEL (423 aa). An interaction with DNA region spans residues 186–191; the sequence is SAGRVQ. Tyrosine 321 functions as the O-(5'-phospho-DNA)-tyrosine intermediate in the catalytic mechanism. 2 C4-type zinc fingers span residues 595–621 and 635–663; these read CDVCGSPMVIKLGRFGKFYACSNFPDC and CPLCHEGNIIERKTKKNRIFYGCDRYPDC. The segment at 676–702 adopts a C4-type 3; atypical zinc-finger fold; the sequence is CPKSGHFLVEKKVRGGGKQVVCSNDEC.

This sequence belongs to the type IA topoisomerase family. As to quaternary structure, monomer. Mg(2+) serves as cofactor.

The catalysed reaction is ATP-independent breakage of single-stranded DNA, followed by passage and rejoining.. Functionally, releases the supercoiling and torsional tension of DNA, which is introduced during the DNA replication and transcription, by transiently cleaving and rejoining one strand of the DNA duplex. Introduces a single-strand break via transesterification at a target site in duplex DNA. The scissile phosphodiester is attacked by the catalytic tyrosine of the enzyme, resulting in the formation of a DNA-(5'-phosphotyrosyl)-enzyme intermediate and the expulsion of a 3'-OH DNA strand. The free DNA strand then undergoes passage around the unbroken strand, thus removing DNA supercoils. Finally, in the religation step, the DNA 3'-OH attacks the covalent intermediate to expel the active-site tyrosine and restore the DNA phosphodiester backbone. This is DNA topoisomerase 1 from Lactococcus lactis subsp. lactis (strain IL1403) (Streptococcus lactis).